Reading from the N-terminus, the 438-residue chain is Acid phosphatase type 7 (438 aa).

The signal sequence occupies residues 1-23 (MSPFLGGWLFFCMLLPFSPGVQG). Fe cation contacts are provided by D141, D170, and Y173. D170 provides a ligand contact to Zn(2+). N205 provides a ligand contact to Zn(2+). N211 is a glycosylation site (N-linked (GlcNAc...) asparagine). Zn(2+) is bound by residues H286 and H333. H335 contacts Fe cation. Residues N350 and N404 are each glycosylated (N-linked (GlcNAc...) asparagine).

Belongs to the metallophosphoesterase superfamily. Purple acid phosphatase family. Fe cation serves as cofactor. Zn(2+) is required as a cofactor.

It localises to the secreted. The catalysed reaction is a phosphate monoester + H2O = an alcohol + phosphate. The protein is Acid phosphatase type 7 of Mus musculus (Mouse).